Consider the following 304-residue polypeptide: MDMTGILPLAKPRGMTSHDCVAKLRRLLKTKKVGHTGTLDPDVYGVLPVCIGHATKVAQYMSDYPKAYEGEVTVGFSTTTEDRSGDTVETKTIQQPFVEAVVDQVLATFVGEIKQIPPMYSAVKVRGKRLYEYARAGITVERPERTVTIFSLERMSDIVYEEGVCRFRFNVSCSKGTYVRTLAVDIGKALGYPAHMSDLVRTKSGPFSLEECFTFTELEERLEQGEGSSLLLPIETAILDIPRVQVNKEIEEKIRHGAVLPQKWFNHPRFTVYNEEGALLAIYKAHPSKDGFVKPEKMLANDQQ.

The active-site Nucleophile is the Asp-40.

The protein belongs to the pseudouridine synthase TruB family. Type 1 subfamily.

It carries out the reaction uridine(55) in tRNA = pseudouridine(55) in tRNA. In terms of biological role, responsible for synthesis of pseudouridine from uracil-55 in the psi GC loop of transfer RNAs. The chain is tRNA pseudouridine synthase B from Halalkalibacterium halodurans (strain ATCC BAA-125 / DSM 18197 / FERM 7344 / JCM 9153 / C-125) (Bacillus halodurans).